A 224-amino-acid polypeptide reads, in one-letter code: Peptidyl-prolyl cis-trans isomerase FKBP3 (224 aa).

Position 2 is an N-acetylalanine (alanine 2). Serine 36 is subject to Phosphoserine. A disordered region spans residues 88–118 (VKLSDDKPKDSKSEETLDEGPPKYTKSILKK). Residues 89–102 (KLSDDKPKDSKSEE) are compositionally biased toward basic and acidic residues. Lysine 99 carries the post-translational modification N6-acetyllysine. A PPIase FKBP-type domain is found at 128 to 224 (GDVVHCWYTG…IFEVELVDID (97 aa)). Residue serine 152 is modified to Phosphoserine. Lysine 170 is subject to N6-acetyllysine.

Belongs to the FKBP-type PPIase family.

The protein localises to the nucleus. It catalyses the reaction [protein]-peptidylproline (omega=180) = [protein]-peptidylproline (omega=0). Inhibited preferentially by rapamycin over FK506. In terms of biological role, FK506- and rapamycin-binding proteins (FKBPs) constitute a family of receptors for the two immunosuppressants which inhibit T-cell proliferation by arresting two distinct cytoplasmic signal transmission pathways. PPIases accelerate the folding of proteins. The protein is Peptidyl-prolyl cis-trans isomerase FKBP3 (Fkbp3) of Mus musculus (Mouse).